The chain runs to 508 residues: Adenosine deaminase (508 aa).

An N-terminal signal peptide occupies residues M1–A18.

It belongs to the metallo-dependent hydrolases superfamily. Adenosine and AMP deaminases family. ADGF subfamily. It depends on Zn(2+) as a cofactor. Salivary gland (at protein level).

The protein resides in the secreted. The catalysed reaction is adenosine + H2O + H(+) = inosine + NH4(+). In terms of biological role, catalyzes the deamination of adenosine to inosine. This is Adenosine deaminase from Lutzomyia longipalpis (Sand fly).